The sequence spans 186 residues: Elongation factor P (186 aa).

The protein belongs to the elongation factor P family.

The protein resides in the cytoplasm. It participates in protein biosynthesis; polypeptide chain elongation. In terms of biological role, involved in peptide bond synthesis. Stimulates efficient translation and peptide-bond synthesis on native or reconstituted 70S ribosomes in vitro. Probably functions indirectly by altering the affinity of the ribosome for aminoacyl-tRNA, thus increasing their reactivity as acceptors for peptidyl transferase. This Streptococcus pneumoniae (strain Hungary19A-6) protein is Elongation factor P.